Reading from the N-terminus, the 373-residue chain is Geraniol dehydrogenase (373 aa).

7 residues coordinate Zn(2+): cysteine 47, histidine 67, cysteine 96, cysteine 99, cysteine 102, cysteine 110, and cysteine 175.

This sequence belongs to the zinc-containing alcohol dehydrogenase family. In terms of assembly, homodimer. The cofactor is Zn(2+).

The enzyme catalyses (2E)-geraniol + NAD(+) = (2E)-geranial + NADH + H(+). The catalysed reaction is perillyl alcohol + NAD(+) = perillyl aldehyde + NADH + H(+). It functions in the pathway terpene metabolism; monoterpene degradation. Is inhibited by EDTA, N-ethylmaleimide, diethylpyrocarbonate, and 1-cyclohexyl-N-(2-morpholinoethyl)carbodiimide in vitro. Its function is as follows. Involved in the degradation of the monoterpenes beta-myrcene and limonene. During anaerobic degradation of beta-myrcene, catalyzes the NAD(+)-dependent oxidation of geraniol to geranial. Can also catalyze the oxidation of (S)-perillyl alcohol to perillyl aldehyde, and to a lesser extent, the oxidation of nerol, citronellol, cumic alcohol, and benzyl alcohol. Cannot use NADP(+) instead of NAD(+) as cosubstrate. This Castellaniella defragrans (strain DSM 12143 / CCUG 39792 / 65Phen) (Alcaligenes defragrans) protein is Geraniol dehydrogenase.